Reading from the N-terminus, the 199-residue chain is Minor spike protein H (199 aa).

Positions 171-199 (EDSNGPRLSNLREEKKPNQMPLKNGKLNT) are disordered.

It belongs to the microviridae H protein family.

It localises to the virion. Probably triggers with protein G the injection of the phage DNA into the host upon conformational changes induced by virus-host receptor interaction. The polypeptide is Minor spike protein H (Bdellovibrio bacteriovorus (Bacteriophage phiMH2K)).